A 256-amino-acid polypeptide reads, in one-letter code: Ribonuclease 3-like protein 1 (256 aa).

Residues 22–168 (AEVERALGGY…IVGAVYLDSK (147 aa)) form the RNase III domain. Mg(2+) contacts are provided by Glu-65, Asp-154, and Glu-157.

The cofactor is Mg(2+). Mn(2+) is required as a cofactor.

In terms of biological role, cleaves double-stranded RNA (dsRNA). The chain is Ribonuclease 3-like protein 1 from Oryza sativa subsp. japonica (Rice).